We begin with the raw amino-acid sequence, 160 residues long: Cytochrome b6-f complex subunit 4 (160 aa).

The next 3 helical transmembrane spans lie at 36–56 (LLYIFPVVILGTIACNVGLAV), 95–115 (LLGVLLMVSVPAGLLTVPFLE), and 131–151 (TVFLIGTAAALWLGIGATLPI).

Belongs to the cytochrome b family. PetD subfamily. The 4 large subunits of the cytochrome b6-f complex are cytochrome b6, subunit IV (17 kDa polypeptide, petD), cytochrome f and the Rieske protein, while the 4 small subunits are petG, petL, petM and petN. The complex functions as a dimer.

It is found in the plastid. Its subcellular location is the chloroplast thylakoid membrane. Its function is as follows. Component of the cytochrome b6-f complex, which mediates electron transfer between photosystem II (PSII) and photosystem I (PSI), cyclic electron flow around PSI, and state transitions. This Arabidopsis thaliana (Mouse-ear cress) protein is Cytochrome b6-f complex subunit 4.